Reading from the N-terminus, the 43-residue chain is Snake venom metalloproteinase crotalin (43 aa).

Residues 1–43 (LLRRKSHDHAQNHDGDKCLRGASLGYYQSFLNQYKPQCILNKP) enclose the Peptidase M12B domain. His-13 contacts Zn(2+).

This sequence belongs to the venom metalloproteinase (M12B) family. P-I subfamily. In terms of assembly, monomer. It depends on Zn(2+) as a cofactor. Post-translationally, this protein autoproteolytically degrades to 10 kDa and 14 kDa fragments in the presence of SDS. Interestingly, the two fragments, as well as reduced crotalin are able to bind vWF, indicating that the binding activity does not require a specific protein conformation. As to expression, expressed by the venom gland.

Its subcellular location is the secreted. Its function is as follows. Snake venom zinc metalloproteinase that inhibits ristocin-induced platelet aggregation by abolishing the binding of von Willebrand factor (vWF) to platelet glycoprotein Ib alpha (GPIBA) through the cleavage of both GP1BA and vWF. Also has fibrinogenolytic activities by degrading the alpha- (FGA) and beta-chain (FGB) of fibrinogen. In vivo, induces a slight hemorrhage when applied to chick chorioallantoic membrane and has potent antithrombic effect. The sequence is that of Snake venom metalloproteinase crotalin from Crotalus atrox (Western diamondback rattlesnake).